A 117-amino-acid polypeptide reads, in one-letter code: Ribosome-binding factor A (117 aa).

This sequence belongs to the RbfA family. As to quaternary structure, monomer. Binds 30S ribosomal subunits, but not 50S ribosomal subunits or 70S ribosomes.

It localises to the cytoplasm. In terms of biological role, one of several proteins that assist in the late maturation steps of the functional core of the 30S ribosomal subunit. Associates with free 30S ribosomal subunits (but not with 30S subunits that are part of 70S ribosomes or polysomes). Required for efficient processing of 16S rRNA. May interact with the 5'-terminal helix region of 16S rRNA. The protein is Ribosome-binding factor A of Streptococcus thermophilus (strain CNRZ 1066).